A 137-amino-acid polypeptide reads, in one-letter code: Gonadotropin subunit beta-1 (137 aa).

The first 24 residues, 1–24 (MYCTHLMTLQLVVMAMLWVTPVRA), serve as a signal peptide directing secretion. Disulfide bonds link cysteine 32/cysteine 78, cysteine 46/cysteine 93, cysteine 55/cysteine 108, cysteine 59/cysteine 110, and cysteine 113/cysteine 120. The N-linked (GlcNAc...) asparagine glycan is linked to asparagine 36.

The protein belongs to the glycoprotein hormones subunit beta family. In terms of assembly, heterodimer of an alpha and a beta chain.

The protein localises to the secreted. Its function is as follows. Involved in gametogenesis and steroidogenesis. The protein is Gonadotropin subunit beta-1 (cgba) of Oncorhynchus keta (Chum salmon).